Reading from the N-terminus, the 110-residue chain is Class I hydrophobin 2 (110 aa).

Positions 1-17 (MQFKFLTTVALATLAVA) are cleaved as a signal peptide. Disulfide bonds link C28-C89, C36-C83, C37-C71, and C90-C103. An N-linked (GlcNAc...) asparagine glycan is attached at N57.

Belongs to the fungal hydrophobin family. As to quaternary structure, self-assembles to form functional amyloid fibrils called rodlets. Self-assembly into fibrillar rodlets occurs spontaneously at hydrophobic:hydrophilic interfaces and the rodlets further associate laterally to form amphipathic monolayers.

It is found in the secreted. Its subcellular location is the cell wall. Its function is as follows. Aerial growth, conidiation, and dispersal of filamentous fungi in the environment rely upon a capability of their secreting small amphipathic proteins called hydrophobins (HPBs) with low sequence identity. Class I can self-assemble into an outermost layer of rodlet bundles on aerial cell surfaces, conferring cellular hydrophobicity that supports fungal growth, development and dispersal; whereas Class II form highly ordered films at water-air interfaces through intermolecular interactions but contribute nothing to the rodlet structure. CoH2 is an asexual monokaryon-specific class I hydrophobin that is involved in aerial growth of mycelia. The sequence is that of Class I hydrophobin 2 from Coprinopsis cinerea (Inky cap fungus).